The primary structure comprises 1254 residues: DNA-directed RNA polymerase subunit beta (1254 aa).

This sequence belongs to the RNA polymerase beta chain family. The RNAP catalytic core consists of 2 alpha, 1 beta, 1 beta' and 1 omega subunit. When a sigma factor is associated with the core the holoenzyme is formed, which can initiate transcription.

It catalyses the reaction RNA(n) + a ribonucleoside 5'-triphosphate = RNA(n+1) + diphosphate. Functionally, DNA-dependent RNA polymerase catalyzes the transcription of DNA into RNA using the four ribonucleoside triphosphates as substrates. This chain is DNA-directed RNA polymerase subunit beta, found in Protochlamydia amoebophila (strain UWE25).